We begin with the raw amino-acid sequence, 121 residues long: Estrogen receptor (121 aa).

One can recognise an NR LBD domain in the interval 1 to 121; it reads LFAPNLLLDR…IRHMSNKGME (121 aa). A lipid anchor (S-palmitoyl cysteine) is attached at cysteine 45.

It belongs to the nuclear hormone receptor family. NR3 subfamily. In terms of assembly, binds DNA as a homodimer. Can form a heterodimer with ESR2. Interacts with coactivator NCOA5. Interacts with NCOA7; the interaction is ligand-inducible. Interacts with AKAP13, CUEDC2, HEXIM1, KDM5A, MAP1S, PELP1, SMARD1, and UBE1C. Interacts with MUC1; the interaction is stimulated by 7 beta-estradiol (E2) and enhances ERS1-mediated transcription. Interacts with DNTTIP2, and UIMC1. Interacts with KMT2D/MLL2. Interacts with ATAD2; the interaction is enhanced by estradiol. Interacts with KIF18A and LDB1. Interacts with RLIM (via its C-terminus). Interacts with MACROD1. Interacts with SH2D4A and PLCG. Interacts with SH2D4A; the interaction blocks binding to PLCG and inhibits estrogen-induced cell proliferation. Interacts with DYNLL1. Interacts with CCDC62; the interaction requires estradiol and appears to enhance the transcription of target genes. Interacts with NR2C1; the interaction prevents homodimerization of ESR1 and suppresses its transcriptional activity and cell growth. Interacts with DNAAF4. Interacts with PRMT2. Interacts with PI3KR1 or PIK3R2, SRC and PTK2/FAK1. Interacts with RBFOX2. Interacts with EP300; the interaction is estrogen-dependent and enhanced by CITED1. Interacts with CITED1; the interaction is estrogen-dependent. Interacts with FAM120B, FOXL2, PHB2 and SLC30A9. Interacts with coactivators NCOA3 and NCOA6. Interacts with STK3/MST2 only in the presence of SAV1 and vice-versa. Binds to CSNK1D. Interacts with NCOA2; NCOA2 can interact with ESR1 AF-1 and AF-2 domains simultaneously and mediate their transcriptional synergy. Interacts with DDX5. Interacts with NCOA1; the interaction seems to require a self-association of N-terminal and C-terminal regions. Interacts with ZNF366, DDX17, NFKB1, RELA, SP1 and SP3. Interacts with NRIP1. Interacts with GPER1; the interaction occurs in an estrogen-dependent manner. Interacts with CLOCK and the interaction is stimulated by estrogen. Interacts with TRIP4 (ufmylated); estrogen dependent. Interacts with LMTK3; the interaction phosphorylates ESR1 (in vitro) and protects it against proteasomal degradation. Interacts with CCAR2 (via N-terminus) in a ligand-independent manner. Interacts with ZFHX3. Interacts with SFR1 in a ligand-dependent and -independent manner. Interacts with DCAF13, LATS1 and DCAF1; regulates ESR1 ubiquitination and ubiquitin-mediated proteasomal degradation. Interacts (via DNA-binding domain) with POU4F2 (C-terminus); this interaction increases the estrogen receptor ESR1 transcriptional activity in a DNA- and ligand 17-beta-estradiol-independent manner. Interacts with ESRRB isoform 1. Interacts with UBE3A and WBP2. Interacts with GTF2B. Interacts with RBM39. In the absence of hormonal ligand, interacts with TACC1. Interacts with BAG1; the interaction is promoted in the absence of estradiol (17-beta-estradiol/E2). Interacts with and ubiquitinated by STUB1; the interaction is promoted in the absence of estradiol (17-beta-estradiol/E2). Interacts with NEDD8. Post-translationally, ubiquitinated; regulated by LATS1 via DCAF1 it leads to ESR1 proteasomal degradation. Deubiquitinated by OTUB1. Ubiquitinated by STUB1/CHIP; in the CA1 hippocampal region following loss of endogenous circulating estradiol (17-beta-estradiol/E2). Ubiquitinated by UBR5, leading to its degradation: UBR5 specifically recognizes and binds ligand-bound ESR1 when it is not associated with coactivators (NCOAs). In presence of NCOAs, the UBR5-degron is not accessible, preventing its ubiquitination and degradation. In terms of processing, palmitoylated at Cys-45 by ZDHHC7 and ZDHHC21. Palmitoylation is required for plasma membrane targeting and for rapid intracellular signaling via ERK and AKT kinases and cAMP generation, but not for signaling mediated by the nuclear hormone receptor. Phosphorylated by cyclin A/CDK2 and CK1. Phosphorylation probably enhances transcriptional activity. Dephosphorylation by PPP5C inhibits its transactivation activity. Phosphorylated by LMTK3 (in vitro). Post-translationally, dimethylated by PRMT1. Demethylated by JMJD6.

The protein localises to the nucleus. Its subcellular location is the cytoplasm. It is found in the golgi apparatus. It localises to the cell membrane. In terms of biological role, nuclear hormone receptor. The steroid hormones and their receptors are involved in the regulation of eukaryotic gene expression and affect cellular proliferation and differentiation in target tissues. Ligand-dependent nuclear transactivation involves either direct homodimer binding to a palindromic estrogen response element (ERE) sequence or association with other DNA-binding transcription factors, such as AP-1/c-Jun, c-Fos, ATF-2, Sp1 and Sp3, to mediate ERE-independent signaling. Ligand binding induces a conformational change allowing subsequent or combinatorial association with multiprotein coactivator complexes through LXXLL motifs of their respective components. Mutual transrepression occurs between the estrogen receptor (ER) and NF-kappa-B in a cell-type specific manner. Decreases NF-kappa-B DNA-binding activity and inhibits NF-kappa-B-mediated transcription from the IL6 promoter and displace RELA/p65 and associated coregulators from the promoter. Recruited to the NF-kappa-B response element of the CCL2 and IL8 promoters and can displace CREBBP. Present with NF-kappa-B components RELA/p65 and NFKB1/p50 on ERE sequences. Can also act synergistically with NF-kappa-B to activate transcription involving respective recruitment adjacent response elements; the function involves CREBBP. Can activate the transcriptional activity of TFF1. Also mediates membrane-initiated estrogen signaling involving various kinase cascades. Essential for MTA1-mediated transcriptional regulation of BRCA1 and BCAS3. Maintains neuronal survival in response to ischemic reperfusion injury when in the presence of circulating estradiol (17-beta-estradiol/E2). The chain is Estrogen receptor (ESR1) from Macaca mulatta (Rhesus macaque).